The primary structure comprises 305 residues: tRNA-cytidine(32) 2-sulfurtransferase (305 aa).

A disordered region spans residues 1-20; that stretch reads MTAVLPLPHPLADPAPRDPR. Positions 59-64 match the PP-loop motif motif; the sequence is SGGKDS. [4Fe-4S] cluster-binding residues include C134, C137, and C225. The segment covering 282–293 has biased composition (low complexity); that stretch reads DAPPDLAPDPGA. Residues 282 to 305 are disordered; it reads DAPPDLAPDPGAWLTASDATHDSD.

The protein belongs to the TtcA family. As to quaternary structure, homodimer. It depends on Mg(2+) as a cofactor. [4Fe-4S] cluster is required as a cofactor.

It localises to the cytoplasm. It carries out the reaction cytidine(32) in tRNA + S-sulfanyl-L-cysteinyl-[cysteine desulfurase] + AH2 + ATP = 2-thiocytidine(32) in tRNA + L-cysteinyl-[cysteine desulfurase] + A + AMP + diphosphate + H(+). It participates in tRNA modification. Functionally, catalyzes the ATP-dependent 2-thiolation of cytidine in position 32 of tRNA, to form 2-thiocytidine (s(2)C32). The sulfur atoms are provided by the cysteine/cysteine desulfurase (IscS) system. This is tRNA-cytidine(32) 2-sulfurtransferase from Xanthomonas oryzae pv. oryzae (strain PXO99A).